Reading from the N-terminus, the 507-residue chain is Maturase K (507 aa).

It belongs to the intron maturase 2 family. MatK subfamily.

The protein localises to the plastid. Its subcellular location is the chloroplast. In terms of biological role, usually encoded in the trnK tRNA gene intron. Probably assists in splicing its own and other chloroplast group II introns. This chain is Maturase K, found in Lens ervoides (Beaded lentil).